Consider the following 179-residue polypeptide: MPFGDNYIMSPINRRRCSRVSPVECLQLTWSKCELLVLEFKPRMSFSHTQIVLYPKNTCCHSFKHYLSHQTLSSLKSVESCIRMGNLTCMPSSNSRERSRLRTIVSSIVYTQAVAPISTPTFKVPNQAQMSSPIWIRTETPSNGDNFRSMDDLLEAVNNQRMMLTPKRLTAAVSQKLLM.

Belongs to the geminiviridae protein AC4/C4 family.

Functionally, pathogenicity determinant. May act as a suppressor of RNA-mediated gene silencing, also known as post-transcriptional gene silencing (PTGS), a mechanism of plant viral defense that limits the accumulation of viral RNAs. The polypeptide is Protein AC4 (African cassava mosaic virus (isolate Nigerian) (ACMV)).